A 788-amino-acid chain; its full sequence is Cyclin-F (788 aa).

The Nuclear localization signal 1 signature appears at 20–28 (KRRIRRRPR). One can recognise an F-box domain in the interval 29–76 (NLTILNLPEDALFHILKWLSVGDILAVRAVHSHLKYLVDNHASVWACA). In terms of domain architecture, Cyclin N-terminal spans 291 to 405 (HAVNKQRVFS…EVVSALDGKI (115 aa)). Short sequence motifs (d box) lie at residues 310-313 (RYIL), 343-346 (RRRL), 349-352 (RYRL), and 351-354 (RLQL). 2 disordered regions span residues 566-585 (SARR…RGSF) and 700-788 (TSGY…FLKL). The short motif at 568 to 574 (RRTKRKR) is the Nuclear localization signal 2 element. Residues 582-766 (RGSFVTTPTA…ESCAPQQQVK (185 aa)) form a PEST region. Polar residues-rich tracts occupy residues 700-716 (TSGY…DSGR) and 723-738 (RSTS…NTQP). The short motif at 767 to 770 (RKNL) is the D box 5 element.

This sequence belongs to the cyclin family. Cyclin AB subfamily. As to quaternary structure, component of the SCF(CCNF) complex consisting of CUL1, RBX1, SKP1 and CCNF. Interacts with SKP1. Interacts with CUL1. Interacts with CCNB1; interaction is required for nuclear localization of CCNB1. Interacts with CCP110; this interaction leads to CCP110 ubiquitination and degradation via the proteasome pathway. Interacts (via the Cyclin N-terminal domain) with MYBL2/BMYB. Interacts with FZR1/CDH1 (via N-terminus). Interacts with RRM2 (via Cy motif and when phosphorylated at 'Thr-33'); the interaction occurs exclusively in G2 and early M. Interacts with CDC6 (via Cy motif); the interaction takes place during G2 and M phase. Degraded when the spindle assembly checkpoint is activated during the G2-M transition. Degradation is not dependent on the proteasome or ubiquitin and depends on the C-terminal PEST sequence. In terms of processing, phosphorylated just before cells enter into mitosis. Post-translationally, ubiquitinated by the anaphase-promoting complex (APC/C); leading to its degradation by the proteasome.

The protein resides in the nucleus. The protein localises to the cytoplasm. It localises to the perinuclear region. It is found in the cytoskeleton. Its subcellular location is the microtubule organizing center. The protein resides in the centrosome. The protein localises to the centriole. Substrate recognition component of a SCF (SKP1-CUL1-F-box protein) E3 ubiquitin-protein ligase complex which mediates the ubiquitination and subsequent proteasomal degradation of target proteins. The SCF(CCNF) E3 ubiquitin-protein ligase complex is an integral component of the ubiquitin proteasome system (UPS) and links proteasome degradation to the cell cycle. Mediates the substrate recognition and the proteasomal degradation of various target proteins involved in the regulation of cell cycle progression and in the maintenance of genome stability. Mediates the ubiquitination and subsequent proteasomal degradation of CP110 during G2 phase, thereby acting as an inhibitor of centrosome reduplication. In G2, mediates the ubiquitination and proteasomal degradation of CDC6, thereby suppressing DNA re-replication and preventing genome instability. Involved in the ubiquitination and degradation of the substrate adapter CDH1 of the anaphase-promoting complex (APC/C), thereby acting as an antagonist of APC/C in regulating G1 progression and S phase entry. May play a role in the G2 cell cycle checkpoint control after DNA damage, possibly by promoting the ubiquitination of MYBL2/BMYB. The chain is Cyclin-F (CCNF) from Bos taurus (Bovine).